Reading from the N-terminus, the 578-residue chain is Lysine--tRNA ligase (578 aa).

Residues E414 and E421 each coordinate Mg(2+).

The protein belongs to the class-II aminoacyl-tRNA synthetase family. In terms of assembly, homodimer. Requires Mg(2+) as cofactor.

It is found in the cytoplasm. The catalysed reaction is tRNA(Lys) + L-lysine + ATP = L-lysyl-tRNA(Lys) + AMP + diphosphate. This Porphyromonas gingivalis (strain ATCC BAA-308 / W83) protein is Lysine--tRNA ligase.